A 1034-amino-acid polypeptide reads, in one-letter code: MAALRASLLLSCALTAARAFNLDAERPAVYSGAEGSYFGFAVDFFAPDASSMFLLVGAPKANTSQSNVVEGGQVLQCNWNSNRNCQPIIFDSTGNRDFAPDDPLEFKSHQWFGASVRSKNDKILACAPLYHWRTETKQEREPVGTCYLFDGSKSVEYAPCRSTTIDADGQGFCQGGFSIDFTKGDRVLLGGPGSFYWQGQLISDRVAEILAKYDSKVYSTKYDDQLATRPASAAFDDSYLGYSVAVGDFSGDGIEDFVSGVPRAARTLGMVSIYNGKNMSSMYNFTGEQMAAYFGYSVATTDINGDDYTDLFIGAPLFMDRGSDGKLQEVGQVSICLQRASGGFQIAKLNGFEIFARFGSAIAPLGDLDQDGFNDIAVAAPYGGEDKRGLVYIYNGRATGLNAVPSRILEGQWAARTMPPSFGYSLKGATDVDKNGYPDLIVGAFGVDTAVLYRARPVIRVNAALEVNPTILNPENKACSLADVKVSCFKVKFCLKADGKGKLPNSLNFQVELLLDKLKQKGAIRRALFLHSKQPSHSKNMTITKGGKMNCEELDAFLRDESEFRDKLTPITIFMEYRLDYKTAVDATGLHPILNQFIPANMSRQAHILLDCGEDNICKPKLEVSVRSDQKKIYIGDDNPLTLIVTAENQGEGAYEAELFVIVPPQADFIGVVRNNEALARLSCAFKTENQTRMVVCDLGNPMKAGTKLLAGLRFSVHQQSEMDTSVKFDLQIRSSNLFDNLSPVAFYQVDLAISAAVEIRGVSSPDHIFLPIANWQPKENPETEDDIGPLVQHIYELRNNGPSAFSKVMMTLQWPYKYKNYTLLYIVQYDIDGPMNCTSDMEINPLKIKISAPKEDEKNETFSREDNRNHRISRRDLTAIEGDVQTLGCGNADCLKIVCQVGHLERGKSAILYLKSRLWTQTFMNKENQNHSYSLQSSASFNVIEFPYKNLSFEDIHNSTVVTTNITWGIQPQPMPVPVWVIILAVLAGLLLLAVLVLVMYRMGFFKRVRPPQEEQEREQLQPHENGEGTSEA.

The first 19 residues, 1 to 19 (MAALRASLLLSCALTAARA), serve as a signal peptide directing secretion. The Extracellular portion of the chain corresponds to 20-978 (FNLDAERPAV…WGIQPQPMPV (959 aa)). 7 FG-GAP repeats span residues 21-86 (NLDA…RNCQ), 97-158 (DFAP…VEYA), 161-213 (RSTT…LAKY), 225-279 (QLAT…GKNM), 280-345 (SSMY…GGFQ), 346-403 (IAKL…GLNA), and 407-470 (RILE…VNPT). N-linked (GlcNAc...) asparagine glycosylation is present at asparagine 62. 3 cysteine pairs are disulfide-bonded: cysteine 77/cysteine 85, cysteine 126/cysteine 146, and cysteine 160/cysteine 173. Ca(2+)-binding residues include aspartate 248, aspartate 252, isoleucine 254, and aspartate 256. N-linked (GlcNAc...) asparagine glycosylation is found at asparagine 278 and asparagine 284. Residues aspartate 302, asparagine 304, aspartate 306, tyrosine 308, aspartate 310, aspartate 367, aspartate 369, aspartate 371, phenylalanine 373, aspartate 375, aspartate 431, aspartate 433, asparagine 435, tyrosine 437, and aspartate 439 each contribute to the Ca(2+) site. 2 disulfides stabilise this stretch: cysteine 479/cysteine 488 and cysteine 494/cysteine 551. 2 N-linked (GlcNAc...) asparagine glycosylation sites follow: asparagine 540 and asparagine 601. Cystine bridges form between cysteine 612-cysteine 618 and cysteine 684-cysteine 697. Residues asparagine 690, asparagine 821, asparagine 837, and asparagine 860 are each glycosylated (N-linked (GlcNAc...) asparagine). Cystine bridges form between cysteine 838–cysteine 900 and cysteine 890–cysteine 895. Asparagine 931, asparagine 951, asparagine 959, and asparagine 966 each carry an N-linked (GlcNAc...) asparagine glycan. Residues 979-1002 (PVWVIILAVLAGLLLLAVLVLVMY) traverse the membrane as a helical segment. At 1003–1034 (RMGFFKRVRPPQEEQEREQLQPHENGEGTSEA) the chain is on the cytoplasmic side. Residues 1005–1009 (GFFKR) carry the GFFKR motif motif. Positions 1013–1028 (PQEEQEREQLQPHENG) are enriched in basic and acidic residues. The segment at 1013–1034 (PQEEQEREQLQPHENGEGTSEA) is disordered.

This sequence belongs to the integrin alpha chain family. In terms of assembly, heterodimer of an alpha and a beta subunit. The alpha subunit is composed of a heavy and a light chain linked by a disulfide bond. Alpha-V (ITGAV) associates with either beta-1 (ITGB1), beta-3 (ITGB3), beta-5 (ITGB5), beta-6 (ITGB6) or beta-8 (ITGB8). Interacts with RAB25. Interacts with CIB1. Integrins ITGAV:ITGB3 and ITGAV:ITGB5 interact with FBLN5 (via N-terminus). ITGAV:ITGB3 and ITGAV:ITGB5 interact with CCN3. ITGAV:ITGB3 interacts with ADGRA2. ITGAV:ITGB3 interacts with FGF2; it is likely that FGF2 can simultaneously bind ITGAV:ITGB3 and FGF receptors. ITGAV:ITGB3 is found in a ternary complex with CX3CR1 and CX3CL1. ITGAV:ITGB3 is found in a ternary complex with NRG1 and ERBB3. ITGAV:ITGB3 is found in a ternary complex with FGF1 and FGFR1. ITGAV:ITGB3 is found in a ternary complex with IGF1 and IGF1R. ITGAV:ITGB3 interacts with IGF2. ITGAV:ITGB3 and ITGAV:ITGB6 interact with FBN1. ITGAV:ITGB3 interacts with CD9, CD81 and CD151 (via second extracellular domain). ITGAV:ITGB6 interacts with TGFB1.

It is found in the membrane. Its subcellular location is the cell junction. It localises to the focal adhesion. In terms of biological role, the alpha-V (ITGAV) integrins are receptors for vitronectin, cytotactin, fibronectin, fibrinogen, laminin, matrix metalloproteinase-2, osteopontin, osteomodulin, prothrombin, thrombospondin, TGFB1 and vWF. They recognize the sequence R-G-D in a wide array of ligands. Alpha-V integrins may play a role in embryo implantation, angiogenesis and wound healing. ITGAV:ITGB3 binds to fractalkine (CX3CL1) and may act as its coreceptor in CX3CR1-dependent fractalkine signaling. ITGAV:ITGB3 binds to NRG1 (via EGF domain) and this binding is essential for NRG1-ERBB signaling. ITGAV:ITGB3 binds to FGF1 and this binding is essential for FGF1 signaling. ITGAV:ITGB3 binds to FGF2 and this binding is essential for FGF2 signaling. ITGAV:ITGB3 binds to IGF1 and this binding is essential for IGF1 signaling. ITGAV:ITGB3 binds to IGF2 and this binding is essential for IGF2 signaling. ITGAV:ITGB3 binds to IL1B and this binding is essential for IL1B signaling. ITGAV:ITGB3 binds to PLA2G2A via a site (site 2) which is distinct from the classical ligand-binding site (site 1) and this induces integrin conformational changes and enhanced ligand binding to site 1. ITGAV:ITGB3 and ITGAV:ITGB6 act as receptors for fibrillin-1 (FBN1) and mediate R-G-D-dependent cell adhesion to FBN1. Integrin alpha-V/beta-6 or alpha-V/beta-8 (ITGAV:ITGB6 or ITGAV:ITGB8) mediates R-G-D-dependent release of transforming growth factor beta-1 (TGF-beta-1) from regulatory Latency-associated peptide (LAP), thereby playing a key role in TGF-beta-1 activation. ITGAV:ITGB3 acts as a receptor for CD40LG. ITGAV:ITGB3 acts as a receptor for IBSP and promotes cell adhesion and migration to IBSP. The chain is Integrin alpha-V (ITGAV) from Gallus gallus (Chicken).